A 1114-amino-acid chain; its full sequence is Putative surface protein SAV2496/SAV2497 (1114 aa).

Residues M1–A50 form the signal peptide. 3 disordered regions span residues T76–P116, K440–T473, and E496–E1088. Composition is skewed to basic and acidic residues over residues D96 to P116, K451 to K461, G505 to P523, S554 to N570, and K579 to K589. The G5 1 domain maps to S419–T501. One can recognise a G5 2 domain in the interval Y547–T628. A compositionally biased stretch (low complexity) spans T590–I604. 11 stretches are compositionally biased toward basic and acidic residues: residues S605–I618, G632–P650, S681–N697, K706–K716, S733–I746, G760–P778, S809–N825, K834–K844, S861–V874, K918–K929, and F946–Q965. In terms of domain architecture, G5 3 spans Y674–T756. Residues Y802–K884 form the G5 4 domain. One can recognise a G5 5 domain in the interval H930–K1012. Over residues Q968 to P982 the composition is skewed to polar residues. A compositionally biased stretch (basic and acidic residues) spans E996–S1026. Residues L1082–G1086 carry the LPXTG sorting signal motif. T1085 carries the post-translational modification Pentaglycyl murein peptidoglycan amidated threonine. A propeptide spans G1086–N1114 (removed by sortase).

The protein localises to the secreted. It localises to the cell wall. The chain is Putative surface protein SAV2496/SAV2497 from Staphylococcus aureus (strain Mu50 / ATCC 700699).